Consider the following 165-residue polypeptide: Transcriptional repressor NrdR (165 aa).

The segment at 3-34 (CPFCRNPDSRVVDSRMADDGSAIRRRRQCPEC) is a zinc-finger region. One can recognise an ATP-cone domain in the interval 46-136 (LTVIKRSGVG…VYQAFESLED (91 aa)).

This sequence belongs to the NrdR family. Zn(2+) is required as a cofactor.

Functionally, negatively regulates transcription of bacterial ribonucleotide reductase nrd genes and operons by binding to NrdR-boxes. The protein is Transcriptional repressor NrdR of Arthrobacter sp. (strain FB24).